Reading from the N-terminus, the 232-residue chain is F420-dependent NADP reductase (232 aa).

Residues 15 to 18, 37 to 38, K42, V80, V106, and A151 each bind NADP(+); these read TGDQ and SR.

It belongs to the F420-dependent NADP reductase family. As to quaternary structure, homotetramer.

It catalyses the reaction reduced coenzyme F420-(gamma-L-Glu)(n) + NADP(+) = oxidized coenzyme F420-(gamma-L-Glu)(n) + NADPH + 2 H(+). Functionally, catalyzes the reduction of NADP(+) with F420H(2) via hydride transfer, and likely the reverse reaction, i.e. the reduction of F420 with NADPH. Probably functions in the regeneration of NADPH required in biosynthetic reactions. Is specific for reduced F420 as electron donor for the reduction of NADP; neither reduced FAD nor FMN can act as electron donor. The enzyme is also specific for NADP; NAD is not utilized as substrate. The protein is F420-dependent NADP reductase (fno) of Methanothermobacter thermautotrophicus (strain ATCC 29096 / DSM 1053 / JCM 10044 / NBRC 100330 / Delta H) (Methanobacterium thermoautotrophicum).